The primary structure comprises 211 residues: MTGDHIKVIYFNGRGRAESIRMTLVAAGVNYEDERISFQDWPKIKPTIPGGRLPAVKITDNHGHVKWMLESLAIARYMAKKHHMMGETDEEYYNVEKLIGQVEDLEHEYHKTLMKPEEEKQKITKEILNGKVPVLLDIICESLKASTGKLAVGDKVTLADLVLIAVIDHVTDLDKEFLTGKYPEIHKHRENLLASSPRLAKYLSDRAATPF.

The 83-residue stretch at 4-86 (DHIKVIYFNG…YMAKKHHMMG (83 aa)) folds into the GST N-terminal domain. 8 residues coordinate glutathione: tyrosine 10, arginine 16, tryptophan 41, lysine 45, leucine 53, glutamate 70, serine 71, and aspartate 104. The region spanning 88–211 (TDEEYYNVEK…YLSDRAATPF (124 aa)) is the GST C-terminal domain.

The protein belongs to the GST superfamily. Mu family. As to quaternary structure, homodimer.

It carries out the reaction RX + glutathione = an S-substituted glutathione + a halide anion + H(+). Its function is as follows. Conjugation of reduced glutathione to a wide number of exogenous and endogenous hydrophobic electrophiles. GST isoenzymes appear to play a central role in the parasite detoxification system. Other functions are also suspected including a role in increasing the solubility of haematin in the parasite gut. The sequence is that of Glutathione S-transferase class-mu 28 kDa isozyme from Schistosoma bovis (Blood fluke).